The primary structure comprises 212 residues: Peptide methionine sulfoxide reductase MsrA (212 aa).

Residue C52 is part of the active site.

It belongs to the MsrA Met sulfoxide reductase family.

The catalysed reaction is L-methionyl-[protein] + [thioredoxin]-disulfide + H2O = L-methionyl-(S)-S-oxide-[protein] + [thioredoxin]-dithiol. It carries out the reaction [thioredoxin]-disulfide + L-methionine + H2O = L-methionine (S)-S-oxide + [thioredoxin]-dithiol. Its function is as follows. Has an important function as a repair enzyme for proteins that have been inactivated by oxidation. Catalyzes the reversible oxidation-reduction of methionine sulfoxide in proteins to methionine. The protein is Peptide methionine sulfoxide reductase MsrA of Salmonella agona (strain SL483).